Here is a 380-residue protein sequence, read N- to C-terminus: 1-deoxy-D-xylulose 5-phosphate reductoisomerase (380 aa).

Residues Thr10, Gly11, Ser12, Ile13, Gly36, Arg37, Asn38, and Asn120 each coordinate NADPH. 1-deoxy-D-xylulose 5-phosphate is bound at residue Lys121. Glu122 is a binding site for NADPH. Asp146 lines the Mn(2+) pocket. Residues Ser147, Glu148, Ser172, and His195 each contribute to the 1-deoxy-D-xylulose 5-phosphate site. Glu148 serves as a coordination point for Mn(2+). Gly201 is a binding site for NADPH. Residues Ser208, Asn213, Lys214, and Glu217 each coordinate 1-deoxy-D-xylulose 5-phosphate. Glu217 contacts Mn(2+).

It belongs to the DXR family. Mg(2+) is required as a cofactor. It depends on Mn(2+) as a cofactor.

It carries out the reaction 2-C-methyl-D-erythritol 4-phosphate + NADP(+) = 1-deoxy-D-xylulose 5-phosphate + NADPH + H(+). The protein operates within isoprenoid biosynthesis; isopentenyl diphosphate biosynthesis via DXP pathway; isopentenyl diphosphate from 1-deoxy-D-xylulose 5-phosphate: step 1/6. Functionally, catalyzes the NADPH-dependent rearrangement and reduction of 1-deoxy-D-xylulose-5-phosphate (DXP) to 2-C-methyl-D-erythritol 4-phosphate (MEP). The sequence is that of 1-deoxy-D-xylulose 5-phosphate reductoisomerase from Listeria monocytogenes serovar 1/2a (strain ATCC BAA-679 / EGD-e).